The chain runs to 65 residues: MLSIKVDERKPFDISLRNFKRACEKAGIKQELRDRQHYVKPTEKRKIAKRQAVKRARISQRRAFI.

This sequence belongs to the bacterial ribosomal protein bS21 family.

The chain is Small ribosomal subunit protein bS21A from Francisella tularensis subsp. tularensis (strain FSC 198).